The primary structure comprises 358 residues: GDSL esterase/lipase EXL5 (358 aa).

Residues 1 to 21 (MFRKKMLVLALFSIYFLSIEA) form the signal peptide. A glycan (N-linked (GlcNAc...) asparagine) is linked at Asn24. Catalysis depends on Ser36, which acts as the Nucleophile. Active-site residues include Asp333 and His336.

This sequence belongs to the 'GDSL' lipolytic enzyme family. Flower buds.

The protein localises to the secreted. This is GDSL esterase/lipase EXL5 (EXL5) from Arabidopsis thaliana (Mouse-ear cress).